The following is a 234-amino-acid chain: NAD-dependent protein deacylase (234 aa).

The 234-residue stretch at 1-234 (MKNLVILSGA…IEMASQEMLK (234 aa)) folds into the Deacetylase sirtuin-type domain. 9-28 (GAGISAESGIKTFRDAGGLW) is a binding site for NAD(+). Positions 53 and 56 each coordinate substrate. NAD(+) is bound at residue 86–89 (QNVD). Residue His104 is the Proton acceptor of the active site. NAD(+) is bound by residues 169–171 (GTS) and Met217.

This sequence belongs to the sirtuin family. Class III subfamily.

It localises to the cytoplasm. It catalyses the reaction N(6)-acetyl-L-lysyl-[protein] + NAD(+) + H2O = 2''-O-acetyl-ADP-D-ribose + nicotinamide + L-lysyl-[protein]. The catalysed reaction is N(6)-succinyl-L-lysyl-[protein] + NAD(+) + H2O = 2''-O-succinyl-ADP-D-ribose + nicotinamide + L-lysyl-[protein]. In terms of biological role, NAD-dependent lysine deacetylase and desuccinylase that specifically removes acetyl and succinyl groups on target proteins. Modulates the activities of several proteins which are inactive in their acylated form. This chain is NAD-dependent protein deacylase, found in Helicobacter pylori (strain J99 / ATCC 700824) (Campylobacter pylori J99).